The following is a 217-amino-acid chain: MEHSSWHALIKAQLPEGYFGKINQFMEQVYSQGIIYPPKEKVFQALLTTLLEEVKVVILGQDPYHGPGQAQGLSFSVPDSIPAPPSLQNILKELSDDIGVKKSHDLTAWAEQGVLLLNACLTVPAGQANGHAGQIWEPFTDAVIQVVNHLDRPVVFVLWGAYARKKKALVTNPHHLIIESAHPSPLSVYRGFWGSKPFSKANAFLKETGQEPIDWLR.

Aspartate 62 (proton acceptor) is an active-site residue.

The protein belongs to the uracil-DNA glycosylase (UDG) superfamily. UNG family.

Its subcellular location is the cytoplasm. It carries out the reaction Hydrolyzes single-stranded DNA or mismatched double-stranded DNA and polynucleotides, releasing free uracil.. In terms of biological role, excises uracil residues from the DNA which can arise as a result of misincorporation of dUMP residues by DNA polymerase or due to deamination of cytosine. This chain is Uracil-DNA glycosylase, found in Streptococcus pneumoniae (strain JJA).